An 848-amino-acid chain; its full sequence is Aryl hydrocarbon receptor (848 aa).

Met-1 is subject to N-acetylmethionine. Positions 1–10 (MNSSSANITY) are excised as a propeptide. Residues 1 to 10 (MNSSSANITY) are compositionally biased toward polar residues. The tract at residues 1-39 (MNSSSANITYASRKRRKPVQKTVKPIPAEGIKSNPSKRH) is disordered. Short sequence motifs (nuclear localization signal) lie at residues 13–16 (RKRR) and 37–42 (KRHRDR). Residues 27–80 (PAEGIKSNPSKRHRDRLNTELDRLASLLPFPQDVINKLDKLSVLRLSVSYLRAK) enclose the bHLH domain. A DNA-binding region spans residues 38 to 66 (RHRDRLNTELDRLASLLPFPQDVINKLDK). Required for maintaining the overall integrity of the AHR:ARNT heterodimer and its transcriptional activity regions lie at residues 50–82 (LASL…AKSF), 118–126 (LLQALNGFV), and 266–268 (FAI). A Nuclear export signal motif is present at residues 64-72 (LDKLSVLRL). The 71-residue stretch at 111-181 (NLQEGEFLLQ…RQLHWALNPS (71 aa)) folds into the PAS 1 domain. The PAS 2 domain occupies 275 to 342 (PSILEIRTKN…CAESHIRMIK (68 aa)). Residues 348-386 (MIVFRLLTKNNRWTWVQSNARLLYKNGRPDYIIVTQRPL) form the PAC domain. The interval 824–848 (TTHLQPLHHPSEARPFPDLTSSGFL) is disordered.

Homodimer. Heterodimer; efficient DNA binding requires dimerization with another bHLH protein. Interacts with ARNT; the heterodimer ARNT:AHR binds to core DNA sequence 5'-TGCGTG-3' within the dioxin response element (DRE) of target gene promoters and activates their transcription. Binds MYBBP1A. Interacts with coactivators including SRC-1, RIP140 and NOCA7, and with the corepressor SMRT. Interacts with NEDD8 and IVNS1ABP. Interacts with BMAL1. Interacts with HSP90AB1. Interacts with TIPARP; leading to mono-ADP-ribosylation of AHR and subsequent inhibition of AHR. Post-translationally, mono-ADP-ribosylated, leading to inhibit transcription activator activity of AHR. In terms of tissue distribution, expressed in all tissues tested including blood, brain, heart, kidney, liver, lung, pancreas and skeletal muscle. Expressed in retinal photoreceptors.

The protein localises to the cytoplasm. The protein resides in the nucleus. In terms of biological role, ligand-activated transcription factor that enables cells to adapt to changing conditions by sensing compounds from the environment, diet, microbiome and cellular metabolism, and which plays important roles in development, immunity and cancer. Upon ligand binding, translocates into the nucleus, where it heterodimerizes with ARNT and induces transcription by binding to xenobiotic response elements (XRE). Regulates a variety of biological processes, including angiogenesis, hematopoiesis, drug and lipid metabolism, cell motility and immune modulation. Xenobiotics can act as ligands: upon xenobiotic-binding, activates the expression of multiple phase I and II xenobiotic chemical metabolizing enzyme genes (such as the CYP1A1 gene). Mediates biochemical and toxic effects of halogenated aromatic hydrocarbons. Next to xenobiotics, natural ligands derived from plants, microbiota, and endogenous metabolism are potent AHR agonists. Tryptophan (Trp) derivatives constitute an important class of endogenous AHR ligands. Acts as a negative regulator of anti-tumor immunity: indoles and kynurenic acid generated by Trp catabolism act as ligand and activate AHR, thereby promoting AHR-driven cancer cell motility and suppressing adaptive immunity. Regulates the circadian clock by inhibiting the basal and circadian expression of the core circadian component PER1. Inhibits PER1 by repressing the CLOCK-BMAL1 heterodimer mediated transcriptional activation of PER1. The heterodimer ARNT:AHR binds to core DNA sequence 5'-TGCGTG-3' within the dioxin response element (DRE) of target gene promoters and activates their transcription. The chain is Aryl hydrocarbon receptor from Homo sapiens (Human).